Reading from the N-terminus, the 153-residue chain is Transcriptional repressor NrdR 3 (153 aa).

Positions 1–26 (MRCPFCGHDDTQVKDSRPTEDNSAIR) are disordered. A zinc finger spans residues 3-34 (CPFCGHDDTQVKDSRPTEDNSAIRRRRSCPEC). Over residues 7–24 (GHDDTQVKDSRPTEDNSA) the composition is skewed to basic and acidic residues. Residues 49-139 (LVVIKKDGGR…VYRNFREAKD (91 aa)) form the ATP-cone domain.

This sequence belongs to the NrdR family. Zn(2+) is required as a cofactor.

In terms of biological role, negatively regulates transcription of bacterial ribonucleotide reductase nrd genes and operons by binding to NrdR-boxes. In Paramagnetospirillum magneticum (strain ATCC 700264 / AMB-1) (Magnetospirillum magneticum), this protein is Transcriptional repressor NrdR 3.